We begin with the raw amino-acid sequence, 369 residues long: Flagellar P-ring protein (369 aa).

Residues 1–22 form the signal peptide; it reads MLNFKHLMAAALLLSTSLGVQA.

This sequence belongs to the FlgI family. The basal body constitutes a major portion of the flagellar organelle and consists of four rings (L,P,S, and M) mounted on a central rod.

It localises to the periplasm. It is found in the bacterial flagellum basal body. Assembles around the rod to form the L-ring and probably protects the motor/basal body from shearing forces during rotation. This is Flagellar P-ring protein from Pseudomonas fluorescens (strain ATCC BAA-477 / NRRL B-23932 / Pf-5).